The primary structure comprises 190 residues: Lipid A acyltransferase PagP (190 aa).

The N-terminal stretch at 1 to 18 (MKRLISCLTIICALNASA) is a signal peptide. Residues His60, Asp103, and Ser104 contribute to the active site.

The protein belongs to the lipid A palmitoyltransferase family. Homodimer.

It is found in the cell outer membrane. The enzyme catalyses a lipid A + a 1,2-diacyl-sn-glycero-3-phosphocholine = a hepta-acyl lipid A + a 2-acyl-sn-glycero-3-phosphocholine. The catalysed reaction is a lipid IVA + a 1,2-diacyl-sn-glycero-3-phosphocholine = a lipid IVB + a 2-acyl-sn-glycero-3-phosphocholine. It carries out the reaction a lipid IIA + a 1,2-diacyl-sn-glycero-3-phosphocholine = a lipid IIB + a 2-acyl-sn-glycero-3-phosphocholine. Functionally, transfers a fatty acid residue from the sn-1 position of a phospholipid to the N-linked hydroxyfatty acid chain on the proximal unit of lipid A or its precursors. The chain is Lipid A acyltransferase PagP from Legionella pneumophila (strain Paris).